Reading from the N-terminus, the 167-residue chain is Putative peroxiredoxin-B (167 aa).

A Thioredoxin domain is found at 4-167 (IKRGDRFPTT…STAQKIIAKL (164 aa)). The Cysteine sulfenic acid (-SOH) intermediate role is filled by Cys-53. The Microbody targeting signal motif lies at 165 to 167 (AKL).

The protein belongs to the peroxiredoxin family. Prx5 subfamily.

Its subcellular location is the peroxisome membrane. It catalyses the reaction a hydroperoxide + [thioredoxin]-dithiol = an alcohol + [thioredoxin]-disulfide + H2O. Functionally, thiol-specific peroxidase that catalyzes the reduction of hydrogen peroxide and organic hydroperoxides to water and alcohols, respectively. Plays a role in cell protection against oxidative stress by detoxifying peroxides and as sensor of hydrogen peroxide-mediated signaling events. The protein is Putative peroxiredoxin-B (PMPB) of Candida boidinii (Yeast).